Reading from the N-terminus, the 35-residue chain is Bacteriocin lactococcin-G subunit beta (35 aa).

Bacteriocin activity requires interaction of alpha and beta peptides in a molar ratio of 7:1 or 8:1 respectively.

In terms of biological role, kills Lactococci. This chain is Bacteriocin lactococcin-G subunit beta, found in Lactococcus lactis subsp. lactis (Streptococcus lactis).